Here is a 1812-residue protein sequence, read N- to C-terminus: MSEILCHWLNQELKVSQTVSPKSFAKAFSSGYLIGEVLHKYELQDDFAEFSEKRISSAKLNNFSRLEPTLHLLGVQFDQNVAHDIITEKPGVAMKLLYQLYIALQRKKKSGLTGVELQTMQPLTNTKLQNMKSEAFRDRLRNLIPRQTDVSLMRVSHRFQEKYKYKDEDLVHTHLKKLENFQKLQEEQRSFNIEKQRLSRRRQNEIMAQIQAAIIQIPKPASNRTLKALDAQKMMKKKKEAEDVANEIKKFEALIKKDLQAKESASKTSLDAAGQTTTDLLNTYSDDEYIKKIQKRLEEDAFAREQREKRRRRLLMDQLIAHEAQEEAYREEQLVSRLMRQSQQERRIAVQLMHVRHEKEVLWQNRIFREKQYEERRLKDFQDALDREAALAKQAKIDYEEQALREKEMHEQIAAERVQARYKKHYSICAEILDQILDLSTKVADYRMLTNNLIPYKLMHDWKELFFNGMPIYEQASLKHLSAKPSTEQLIELEKRDLLDNNDYEEYKNMVGEWALPEEMVDNIPPSDNRILGHVIHRLIEHSLPPQVESTAPELPSFAIKGCLLGKTFSGKTTALKFLQKYFPIEVLSIDTLVQEAIQAFHNNEKVSGALQLQKAAEEKASPVRQESGDRSQNLHNVLSAEGTPETEDETRLSTKKTPKAEEVIASASLSELTTRAQLGAKSEKLLKKGKSISDTLLVSIVVNAINQIPIYKGWILDGFPMTLNQAKLLEEALTGFNRNLIELEGKKSQISTLAVDPTASREVPLPPSAFDFVMLLDISDNTSLNRMNDIMAEAFLSETPHENINQRVAAENQDMDEDQNLRDQIQHRIIGFWDHWPSLEQWFTEPENILIKMNAEVDEQSLCQKVKEMFMAEIMKKENKAKKKSEEKEAEKKEEFSLPEATPPTPPAPPPSEPEKEKEAHPPHERSKTPTAKGKPASEPPHGNRESPQEGKGKKSETSPKRKGSPRGKSPGGKAPVKKSPADSTDVSPVPAVPPPSKPGSEEWVFVNEPIPEEIPLFLVPYWKLIENSYINSIKTVLRHLREGQHTVLAYLYDTRTGFQQFLRRPDHKQNFVSQWQADFNSLPDDLWEDEETKAELHQRVNDLRDRLWDICDARKEEAEQERLDIINESWLQDSTGIAMNHFFSLMQAELNRFQDTKRLLQDYYRGMECKIPTDDTKRFTRIPLVQLDNKDTLEFQLRIPLVPRRSISPESALSKPKIKALLKGNIDYSLENVELNFEADEKVVMDTWQQASLAVSHMVAAEIHQRLMEEEKENQPADTKEKPPQAAANKKVKKEPPKKKREDKKGKGKSPPMAESAPVITVEEIAEMERKNELRLRIKEEHLAALQFEERATQFRLELIKTKALAFLEDLVTKAVDVYKLMEKWLGERYLNEMASVEKLTEVARYHIETSTKIQNELYLDQEDFFINGNIKVFPDPPPPVRPPPVEKEENGTLTIEQLDNLRDQFLDIAPKGVIGNKAFADILLDLVTLNLGTNNFPSSWMHLTQPELQELASLLVINSELVDWRKFLLVAALPWPIPLEEELLETLQRFKAVDEEQLGTVTFEQYLQAGLWFTGDKDIKIPANPLEPLPFNRQEHLIEFFFRLFADHDKDPPRLDYTEMLLYFACHPDGMEGVYRALSVATGSHVFQPIETPVLVAEKTSSFIDMSPTEEYPEPEDNFISEERELQEEGEEKEEDIPENANTEMISMETLLKVFRGGNEPQDTNRFASYPKTESIYSENFIKVFQDLGSKNLEPIEVAVLLKHPFIQDLIRSYPDYKIPDIKVVLQRSEHIQGSDGESSPSRLTEEKK.

Residues 1-105 (MSEILCHWLN…LLYQLYIALQ (105 aa)) enclose the Calponin-homology (CH) domain. Coiled coils occupy residues 178-260 (LENF…KDLQ) and 374-403 (EERR…EEQA). Positions 618–630 (EEKASPVRQESGD) are enriched in basic and acidic residues. The disordered stretch occupies residues 618–658 (EEKASPVRQESGDRSQNLHNVLSAEGTPETEDETRLSTKKT). Coiled-coil stretches lie at residues 724-750 (LNQA…KKSQ), 803-827 (ENIN…DQIQ), and 868-897 (KEMF…KEEF). A compositionally biased stretch (basic and acidic residues) spans 879–897 (ENKAKKKSEEKEAEKKEEF). Disordered stretches follow at residues 879–1002 (ENKA…KPGS), 1272–1322 (EEKE…APVI), and 1793–1812 (EHIQ…EEKK). Pro residues predominate over residues 902-913 (ATPPTPPAPPPS). 3 stretches are compositionally biased toward basic and acidic residues: residues 914–929 (EPEK…ERSK), 943–961 (HGNR…ETSP), and 1272–1285 (EEKE…KEKP). Over residues 1292 to 1310 (KKVKKEPPKKKREDKKGKG) the composition is skewed to basic residues. An interaction with IFT20 region spans residues 1317–1669 (ESAPVITVEE…AEKTSSFIDM (353 aa)).

As to quaternary structure, interacts (via C-terminus) with IFT20. Interacts with DYNC1I2. In terms of tissue distribution, predominantly expressed in ciliated tissues. Mainly expressed in testis, followed by trachea. Also expressed at lower level in lung, kidney and liver.

Its subcellular location is the cell projection. The protein resides in the cilium. The protein localises to the flagellum. It is found in the cytoplasm. It localises to the golgi apparatus. Its function is as follows. Required for correct axoneme development in spermatozoa. Important for normal development of the manchette and sperm head morphology. Essential for male fertility. Plays a role in localization of the intraflagellar transport protein IFT20 to the manchette, suggesting function as an adapter for dynein-mediated protein transport during spermatogenesis. Also plays a role in bone growth where it seems to be required for normal osteoblast differentiation. The protein is Sperm flagellar protein 2 (SPEF2) of Sus scrofa (Pig).